The primary structure comprises 205 residues: GTP cyclohydrolase-2 (205 aa).

49–53 serves as a coordination point for GTP; sequence RIHSE. Zn(2+) contacts are provided by Cys-54, Cys-65, and Cys-67. GTP contacts are provided by residues Gln-70, 92 to 94, and Thr-114; that span reads EGR. Residue Asp-126 is the Proton acceptor of the active site. Arg-128 functions as the Nucleophile in the catalytic mechanism. GTP-binding residues include Thr-149 and Lys-154.

The protein belongs to the GTP cyclohydrolase II family. Zn(2+) serves as cofactor.

The catalysed reaction is GTP + 4 H2O = 2,5-diamino-6-hydroxy-4-(5-phosphoribosylamino)-pyrimidine + formate + 2 phosphate + 3 H(+). Its pathway is cofactor biosynthesis; riboflavin biosynthesis; 5-amino-6-(D-ribitylamino)uracil from GTP: step 1/4. Its function is as follows. Catalyzes the conversion of GTP to 2,5-diamino-6-ribosylamino-4(3H)-pyrimidinone 5'-phosphate (DARP), formate and pyrophosphate. The protein is GTP cyclohydrolase-2 of Shewanella amazonensis (strain ATCC BAA-1098 / SB2B).